A 135-amino-acid chain; its full sequence is uncharacterized protein (135 aa).

Residues 8-123 (PKGKMVLRTL…IFVYVAVDEF (116 aa)) enclose the HotDog ACOT-type domain.

It belongs to the acyl coenzyme A hydrolase family.

This is an uncharacterized protein from Buchnera aphidicola subsp. Baizongia pistaciae (strain Bp).